The sequence spans 108 residues: Iron-sulfur cluster assembly protein CyaY (108 aa).

It belongs to the frataxin family.

Its function is as follows. Involved in iron-sulfur (Fe-S) cluster assembly. May act as a regulator of Fe-S biogenesis. This chain is Iron-sulfur cluster assembly protein CyaY, found in Pseudoalteromonas atlantica (strain T6c / ATCC BAA-1087).